The following is a 167-amino-acid chain: Myelin basic protein (167 aa).

A1 is subject to N-acetylalanine. A phosphoserine mark is found at S7 and S12. Y14 carries the phosphotyrosine modification. The residue at position 17 (T17) is a Phosphothreonine. Phosphoserine is present on S19. T20 is modified (phosphothreonine). Residues R25 and R31 each carry the citrulline modification. The residue at position 35 (T35) is a Phosphothreonine. S40 carries the phosphoserine modification. 2 positions are modified to omega-N-methylarginine: R43 and R49. Residues 45–87 are induces experimental autoimmune encephalomyelitis (EAE) 1; the sequence is FGSDRAAPKRGSGKDSHHAARTTHYGSLPQKSQRSQDENPVVH. The segment at 46-114 is disordered; sequence GSDRAAPKRG…GRGLSLSRFS (69 aa). S56 bears the Phosphoserine mark. The residue at position 67 (T67) is a Phosphothreonine. Position 69 is a phosphotyrosine (Y69). S76 is subject to Phosphoserine. A phosphothreonine mark is found at T94 and T97. Residue Q102 is modified to Deamidated glutamine. Omega-N-methylarginine; alternate is present on R106. Position 106 is a symmetric dimethylarginine; alternate (R106). S114 is subject to Phosphoserine. The interval 114 to 122 is induces experimental autoimmune encephalomyelitis (EAE) 2; the sequence is SWGAEGQKP. K121 carries the N6-acetyllysine modification. A Citrulline modification is found at R129. Residues 136-167 form a disordered region; that stretch reads GFKGAHDAQGTLSKIFKLGGRDSRSGSPMARR. Q144 is modified (deamidated glutamine). The residue at position 156 (R156) is a Citrulline. The residue at position 158 (S158) is a Phosphoserine. At S162 the chain carries Phosphoserine; by UHMK1. Residue R167 is modified to Citrulline.

It belongs to the myelin basic protein family. Homodimer. At least 5 charge isomers; C1 (the most cationic, least modified, and most abundant form), C2, C3, C4 and C5 (the least cationic form); are produced as a result of optional post-translational modifications such as phosphorylation of serine or threonine residues, deamidation of glutamine or asparagine residues, citrullination and methylation of arginine residues. C1 and C2 are unphosphorylated, C3 and C4 are monophosphorylated and C5 is phosphorylated at two positions. Post-translationally, phosphorylated by TAOK2, VRK2, MAPK11, MAPK12, MAPK14 and MINK1. In terms of processing, proteolytically cleaved in B cell lysosomes by cathepsin CTSG which degrades the major immunogenic MBP epitope and prevents the activation of MBP-specific autoreactive T cells. In terms of tissue distribution, found in both the central and the peripheral nervous system.

It is found in the myelin membrane. Its function is as follows. Is, with PLP, the most abundant protein component of the myelin membrane in the CNS. Has a role in both the formation and stabilization of this compact multilayer arrangement of bilayers. Each splice variant and charge isomer may have a specialized function in the assembly of an optimized, biochemically functional myelin membrane. The chain is Myelin basic protein (MBP) from Cavia porcellus (Guinea pig).